Here is a 273-residue protein sequence, read N- to C-terminus: 4-hydroxy-tetrahydrodipicolinate reductase (273 aa).

NAD(+) contacts are provided by residues G12–M17 and E38. R39 lines the NADP(+) pocket. NAD(+)-binding positions include G102 to T104 and A126 to F129. H159 (proton donor/acceptor) is an active-site residue. H160 provides a ligand contact to (S)-2,3,4,5-tetrahydrodipicolinate. K163 acts as the Proton donor in catalysis. G169–T170 contributes to the (S)-2,3,4,5-tetrahydrodipicolinate binding site.

The protein belongs to the DapB family. Homotetramer.

It is found in the cytoplasm. It catalyses the reaction (S)-2,3,4,5-tetrahydrodipicolinate + NAD(+) + H2O = (2S,4S)-4-hydroxy-2,3,4,5-tetrahydrodipicolinate + NADH + H(+). The enzyme catalyses (S)-2,3,4,5-tetrahydrodipicolinate + NADP(+) + H2O = (2S,4S)-4-hydroxy-2,3,4,5-tetrahydrodipicolinate + NADPH + H(+). The protein operates within amino-acid biosynthesis; L-lysine biosynthesis via DAP pathway; (S)-tetrahydrodipicolinate from L-aspartate: step 4/4. Catalyzes the conversion of 4-hydroxy-tetrahydrodipicolinate (HTPA) to tetrahydrodipicolinate. This chain is 4-hydroxy-tetrahydrodipicolinate reductase, found in Shigella boydii serotype 4 (strain Sb227).